We begin with the raw amino-acid sequence, 497 residues long: Nuclear pore complex protein npp-16 (497 aa).

Disordered stretches follow at residues valine 76–lysine 95, threonine 210–lysine 308, and methionine 359–valine 379. 2 stretches are compositionally biased toward basic and acidic residues: residues lysine 231–proline 240 and lysine 250–alanine 260. The interval glutamate 390 to valine 497 is ranBD1.

As to quaternary structure, interacts with importin beta imb-1. Interacts with DNA-directed RNA polymerase III subunit rpc-1. Interacts with TATA-box-binding protein tbp-1. Interacts with GTF3C5 homolog tftc-5. Interacts with GTF3C3 homolog tftc-3.

It localises to the nucleus. The protein localises to the nuclear pore complex. It is found in the nucleus membrane. Component of the nuclear pore complex. Plays a direct role in nuclear protein import. Required for anoxia-induced prophase arrest; may function in concert with cdk-1 to arrest prophase blastomeres in response to anoxia. This chain is Nuclear pore complex protein npp-16, found in Caenorhabditis elegans.